The chain runs to 213 residues: Uracil phosphoribosyltransferase (213 aa).

Residues R78, R103, and 131-139 (DPMLATGGT) contribute to the 5-phospho-alpha-D-ribose 1-diphosphate site. Uracil contacts are provided by residues I197 and 202–204 (GDA). 5-phospho-alpha-D-ribose 1-diphosphate is bound at residue D203.

This sequence belongs to the UPRTase family. Mg(2+) is required as a cofactor.

The enzyme catalyses UMP + diphosphate = 5-phospho-alpha-D-ribose 1-diphosphate + uracil. Its pathway is pyrimidine metabolism; UMP biosynthesis via salvage pathway; UMP from uracil: step 1/1. Its activity is regulated as follows. Allosterically activated by GTP. Its function is as follows. Catalyzes the conversion of uracil and 5-phospho-alpha-D-ribose 1-diphosphate (PRPP) to UMP and diphosphate. This is Uracil phosphoribosyltransferase from Bifidobacterium longum (strain DJO10A).